Consider the following 427-residue polypeptide: Probable anaerobic glycerol-3-phosphate dehydrogenase subunit B (427 aa).

It belongs to the anaerobic G-3-P dehydrogenase subunit B family. The cofactor is FMN.

The enzyme catalyses a quinone + sn-glycerol 3-phosphate = dihydroxyacetone phosphate + a quinol. It participates in polyol metabolism; glycerol degradation via glycerol kinase pathway; glycerone phosphate from sn-glycerol 3-phosphate (anaerobic route): step 1/1. This Halobacterium salinarum (strain ATCC 29341 / DSM 671 / R1) protein is Probable anaerobic glycerol-3-phosphate dehydrogenase subunit B.